Reading from the N-terminus, the 192-residue chain is UPF0312 protein Ent638_1570 (192 aa).

A signal peptide spans 1–22 (MKKRLLGIALGSLLFTTGSAVA).

It belongs to the UPF0312 family. Type 1 subfamily.

It localises to the periplasm. In Enterobacter sp. (strain 638), this protein is UPF0312 protein Ent638_1570.